We begin with the raw amino-acid sequence, 428 residues long: Sporulation kinase C (428 aa).

2 helical membrane passes run 8–28 and 36–56; these read IISIILAMIFIMFWDYLFYFI and PVDIVYTAVTLVSVWMLAYYI. The PAS domain occupies 76–147; sequence LSEEKNRIMD…NTQIQNKASS (72 aa). The PAC domain maps to 148–200; the sequence is GMFTAKYVTKNGTIFWGEVHYKLYYDRDDQFTGSLGTMSDITERKEAEDELIE. A Histidine kinase domain is found at 221–426; it reads GIAHEVRNPL…VFQVVLPLKS (206 aa). Position 224 is a phosphohistidine; by autocatalysis (His224).

Oligomerizes, probably forms homodimers; oligomerization is assisted by FloT. Interacts with FloT. Another study shows only rare colocalization with FloT or FloA membrane assemblies. KinC membrane assemblies are more mobile than FloT membrane assemblies.

The protein resides in the cell membrane. The protein localises to the membrane raft. It catalyses the reaction ATP + protein L-histidine = ADP + protein N-phospho-L-histidine.. Functionally, phosphorylates the sporulation-regulatory protein Spo0A a transcription factor that also controls biofilm formation. Requires FloT and FloA for localization to DRMs and for activity. This Bacillus subtilis (strain 168) protein is Sporulation kinase C.